The primary structure comprises 410 residues: uncharacterized protein (410 aa).

The span at 178–187 (QKNHRNQLST) shows a compositional bias: polar residues. 2 disordered regions span residues 178–203 (QKNH…QEHQ) and 236–272 (RAEQ…PTVQ). Residues 188–198 (QKKQQQALQKA) show a composition bias toward low complexity. Residues 236 to 263 (RAEQAAREQEKREREALAQRQKAEEKRT) show a composition bias toward basic and acidic residues.

This is an uncharacterized protein from Haemophilus influenzae (strain ATCC 51907 / DSM 11121 / KW20 / Rd).